The sequence spans 206 residues: Protein YmaB (206 aa).

The polypeptide is Protein YmaB (ymaB) (Bacillus subtilis (strain 168)).